We begin with the raw amino-acid sequence, 380 residues long: Chaperone protein DnaJ (380 aa).

Residues 5-69 enclose the J domain; that stretch reads DFYEVLGVGR…QKKAAYDQYG (65 aa). A CR-type zinc finger spans residues 135–213; that stretch reads GCSKEIRVPT…CHGQGRVEKT (79 aa). C148, C151, C165, C168, C187, C190, C201, and C204 together coordinate Zn(2+). 4 CXXCXGXG motif repeats span residues 148–155, 165–172, 187–194, and 201–208; these read CDSCDGSG, CGTCHGQG, CPHCHGRG, and CNSCHGQG.

It belongs to the DnaJ family. As to quaternary structure, homodimer. It depends on Zn(2+) as a cofactor.

Its subcellular location is the cytoplasm. Participates actively in the response to hyperosmotic and heat shock by preventing the aggregation of stress-denatured proteins and by disaggregating proteins, also in an autonomous, DnaK-independent fashion. Unfolded proteins bind initially to DnaJ; upon interaction with the DnaJ-bound protein, DnaK hydrolyzes its bound ATP, resulting in the formation of a stable complex. GrpE releases ADP from DnaK; ATP binding to DnaK triggers the release of the substrate protein, thus completing the reaction cycle. Several rounds of ATP-dependent interactions between DnaJ, DnaK and GrpE are required for fully efficient folding. Also involved, together with DnaK and GrpE, in the DNA replication of plasmids through activation of initiation proteins. The sequence is that of Chaperone protein DnaJ from Photobacterium profundum (strain SS9).